Consider the following 397-residue polypeptide: Succinyl-diaminopimelate desuccinylase (397 aa).

Residue His73 participates in Zn(2+) binding. Asp75 is an active-site residue. Position 106 (Asp106) interacts with Zn(2+). Catalysis depends on Glu140, which acts as the Proton acceptor. Zn(2+) contacts are provided by Glu141, Glu169, and His366.

This sequence belongs to the peptidase M20A family. DapE subfamily. Homodimer. It depends on Zn(2+) as a cofactor. Co(2+) is required as a cofactor.

It carries out the reaction N-succinyl-(2S,6S)-2,6-diaminopimelate + H2O = (2S,6S)-2,6-diaminopimelate + succinate. The protein operates within amino-acid biosynthesis; L-lysine biosynthesis via DAP pathway; LL-2,6-diaminopimelate from (S)-tetrahydrodipicolinate (succinylase route): step 3/3. Functionally, catalyzes the hydrolysis of N-succinyl-L,L-diaminopimelic acid (SDAP), forming succinate and LL-2,6-diaminopimelate (DAP), an intermediate involved in the bacterial biosynthesis of lysine and meso-diaminopimelic acid, an essential component of bacterial cell walls. The polypeptide is Succinyl-diaminopimelate desuccinylase (Rhizobium rhizogenes (strain K84 / ATCC BAA-868) (Agrobacterium radiobacter)).